A 454-amino-acid polypeptide reads, in one-letter code: Ornithine aminotransferase (454 aa).

3 residues coordinate pyridoxal 5'-phosphate: Gly124, Thr125, and Gln267. The residue at position 293 (Lys293) is an N6-(pyridoxal phosphate)lysine. Residue Thr321 coordinates pyridoxal 5'-phosphate.

It belongs to the class-III pyridoxal-phosphate-dependent aminotransferase family. Homotetramer; dimer of dimers. Requires pyridoxal 5'-phosphate as cofactor.

It carries out the reaction L-ornithine + 2-oxoglutarate = L-glutamate 5-semialdehyde + L-glutamate. The catalysed reaction is L-lysine + 2-oxoglutarate = (S)-2-amino-6-oxohexanoate + L-glutamate. In terms of biological role, catalyzes the conversion of L-ornithine and 2-oxoglutarate to L-glutamate semialdehyde and L-glutamate. L-ornithine is the best substrate, but the enzyme also shows good activity toward L-lysine, and low activity toward D-ornithine, D-lysine, 5-aminovalerate, 6-aminohexanoate and GABA. The enzyme activity is specific for 2-oxoglutarate. In Pyrococcus horikoshii (strain ATCC 700860 / DSM 12428 / JCM 9974 / NBRC 100139 / OT-3), this protein is Ornithine aminotransferase.